We begin with the raw amino-acid sequence, 302 residues long: Protein KTI12 homolog (302 aa).

Residue 8–15 (GQPCSGKS) coordinates ATP. Residues 260-273 (LRRTFVKLMGQSSL) are calmodulin-binding.

This sequence belongs to the KTI12 family. In terms of assembly, interacts with the elongator complex. Binds to calmodulin in a calcium-dependent manner. Expressed in roots, hypocotyls, cotyledons, shoot apices, stems, inflorescence apices, leaves and flowers.

The protein localises to the cytoplasm. Its subcellular location is the nucleus. Its function is as follows. Elongator complex-associated factor that is not a structural subunit but rather transiently contacts the complex. Regulates both meristem activity and organ growth; acts as a positive regulator of adaxial leaf patterning by modulating both cell division and differentiation. Required for an early step in synthesis of 5-carbamoylmethyl (ncm5) groups present on uridines (ncm5U) at the wobble position in tRNA. The sequence is that of Protein KTI12 homolog from Arabidopsis thaliana (Mouse-ear cress).